Here is a 158-residue protein sequence, read N- to C-terminus: Crossover junction endodeoxyribonuclease RuvC (158 aa).

Active-site residues include D7, E67, and D139. Positions 7, 67, and 139 each coordinate Mg(2+).

The protein belongs to the RuvC family. In terms of assembly, homodimer which binds Holliday junction (HJ) DNA. The HJ becomes 2-fold symmetrical on binding to RuvC with unstacked arms; it has a different conformation from HJ DNA in complex with RuvA. In the full resolvosome a probable DNA-RuvA(4)-RuvB(12)-RuvC(2) complex forms which resolves the HJ. Mg(2+) serves as cofactor.

The protein localises to the cytoplasm. The enzyme catalyses Endonucleolytic cleavage at a junction such as a reciprocal single-stranded crossover between two homologous DNA duplexes (Holliday junction).. The RuvA-RuvB-RuvC complex processes Holliday junction (HJ) DNA during genetic recombination and DNA repair. Endonuclease that resolves HJ intermediates. Cleaves cruciform DNA by making single-stranded nicks across the HJ at symmetrical positions within the homologous arms, yielding a 5'-phosphate and a 3'-hydroxyl group; requires a central core of homology in the junction. The consensus cleavage sequence is 5'-(A/T)TT(C/G)-3'. Cleavage occurs on the 3'-side of the TT dinucleotide at the point of strand exchange. HJ branch migration catalyzed by RuvA-RuvB allows RuvC to scan DNA until it finds its consensus sequence, where it cleaves and resolves the cruciform DNA. This chain is Crossover junction endodeoxyribonuclease RuvC, found in Prochlorococcus marinus (strain MIT 9211).